A 304-amino-acid polypeptide reads, in one-letter code: UDP-N-acetylenolpyruvoylglucosamine reductase (304 aa).

Residues 33–213 (IGGPADIMVI…LEITRDLTER (181 aa)) form the FAD-binding PCMH-type domain. Residue arginine 177 is part of the active site. Serine 227 (proton donor) is an active-site residue. Glutamate 297 is a catalytic residue.

It belongs to the MurB family. Requires FAD as cofactor.

It is found in the cytoplasm. The enzyme catalyses UDP-N-acetyl-alpha-D-muramate + NADP(+) = UDP-N-acetyl-3-O-(1-carboxyvinyl)-alpha-D-glucosamine + NADPH + H(+). It participates in cell wall biogenesis; peptidoglycan biosynthesis. Cell wall formation. In Alkaliphilus oremlandii (strain OhILAs) (Clostridium oremlandii (strain OhILAs)), this protein is UDP-N-acetylenolpyruvoylglucosamine reductase.